The chain runs to 186 residues: Lactoylglutathione lyase (186 aa).

The region spanning 28-175 (FMQQTMFRIK…DGYWIELFDR (148 aa)) is the VOC domain. The substrate site is built by Q31 and R35. Q31 provides a ligand contact to Zn(2+). E97 provides a ligand contact to Zn(2+). Substrate-binding positions include N101, R121, H125, and 155–156 (KM). H125 serves as a coordination point for Zn(2+). E171 lines the Zn(2+) pocket. The active-site Proton donor/acceptor is E171.

The protein belongs to the glyoxalase I family. The cofactor is Zn(2+).

The catalysed reaction is (R)-S-lactoylglutathione = methylglyoxal + glutathione. The protein operates within secondary metabolite metabolism; methylglyoxal degradation; (R)-lactate from methylglyoxal: step 1/2. In terms of biological role, catalyzes the conversion of hemimercaptal, formed from methylglyoxal and glutathione, to S-lactoylglutathione. The chain is Lactoylglutathione lyase from Cicer arietinum (Chickpea).